Reading from the N-terminus, the 327-residue chain is Malate dehydrogenase (327 aa).

12-18 (GAAGQIG) contributes to the NAD(+) binding site. Arg-93 and Arg-99 together coordinate substrate. NAD(+) contacts are provided by residues Asn-106, Gln-113, and 130-132 (VGN). Residues Asn-132 and Arg-163 each contribute to the substrate site. The Proton acceptor role is filled by His-188.

It belongs to the LDH/MDH superfamily. MDH type 2 family.

It carries out the reaction (S)-malate + NAD(+) = oxaloacetate + NADH + H(+). Functionally, catalyzes the reversible oxidation of malate to oxaloacetate. This is Malate dehydrogenase from Cupriavidus metallidurans (strain ATCC 43123 / DSM 2839 / NBRC 102507 / CH34) (Ralstonia metallidurans).